The following is a 102-amino-acid chain: Large ribosomal subunit protein bL21 (102 aa).

It belongs to the bacterial ribosomal protein bL21 family. Part of the 50S ribosomal subunit. Contacts protein L20.

Its function is as follows. This protein binds to 23S rRNA in the presence of protein L20. The chain is Large ribosomal subunit protein bL21 from Pelobacter propionicus (strain DSM 2379 / NBRC 103807 / OttBd1).